A 272-amino-acid polypeptide reads, in one-letter code: 3-methyl-2-oxobutanoate hydroxymethyltransferase (272 aa).

2 residues coordinate Mg(2+): aspartate 51 and aspartate 90. 3-methyl-2-oxobutanoate is bound by residues 51–52 (DS), aspartate 90, and lysine 118. Glutamate 120 serves as a coordination point for Mg(2+). Glutamate 187 serves as the catalytic Proton acceptor.

The protein belongs to the PanB family. As to quaternary structure, homodecamer; pentamer of dimers. Requires Mg(2+) as cofactor.

It is found in the cytoplasm. The catalysed reaction is 3-methyl-2-oxobutanoate + (6R)-5,10-methylene-5,6,7,8-tetrahydrofolate + H2O = 2-dehydropantoate + (6S)-5,6,7,8-tetrahydrofolate. The protein operates within cofactor biosynthesis; (R)-pantothenate biosynthesis; (R)-pantoate from 3-methyl-2-oxobutanoate: step 1/2. Its function is as follows. Catalyzes the reversible reaction in which hydroxymethyl group from 5,10-methylenetetrahydrofolate is transferred onto alpha-ketoisovalerate to form ketopantoate. The sequence is that of 3-methyl-2-oxobutanoate hydroxymethyltransferase from Xylella fastidiosa (strain M12).